The chain runs to 790 residues: Phenylalanine--tRNA ligase beta subunit (790 aa).

Residues 39–154 enclose the tRNA-binding domain; it reads PDSLNTVVTG…ADTPLGESAC (116 aa). Residues 404 to 483 form the B5 domain; the sequence is FSPLSLSVRP…FVQKTQKILP (80 aa). 4 residues coordinate Mg(2+): Asp457, Asp463, Glu466, and Glu467. An FDX-ACB domain is found at 694–790; it reads PIYPASSRDI…KLANIGQGNS (97 aa).

It belongs to the phenylalanyl-tRNA synthetase beta subunit family. Type 1 subfamily. As to quaternary structure, tetramer of two alpha and two beta subunits. The cofactor is Mg(2+).

Its subcellular location is the cytoplasm. It catalyses the reaction tRNA(Phe) + L-phenylalanine + ATP = L-phenylalanyl-tRNA(Phe) + AMP + diphosphate + H(+). The protein is Phenylalanine--tRNA ligase beta subunit (pheT) of Chlamydia trachomatis serovar D (strain ATCC VR-885 / DSM 19411 / UW-3/Cx).